The following is a 158-amino-acid chain: 6,7-dimethyl-8-ribityllumazine synthase (158 aa).

5-amino-6-(D-ribitylamino)uracil-binding positions include phenylalanine 24, alanine 58 to glutamate 60, and alanine 82 to isoleucine 84. Glycine 87–threonine 88 serves as a coordination point for (2S)-2-hydroxy-3-oxobutyl phosphate. The active-site Proton donor is histidine 90. Residue phenylalanine 115 coordinates 5-amino-6-(D-ribitylamino)uracil. (2S)-2-hydroxy-3-oxobutyl phosphate is bound at residue arginine 129.

The protein belongs to the DMRL synthase family. As to quaternary structure, forms an icosahedral capsid composed of 60 subunits, arranged as a dodecamer of pentamers.

It carries out the reaction (2S)-2-hydroxy-3-oxobutyl phosphate + 5-amino-6-(D-ribitylamino)uracil = 6,7-dimethyl-8-(1-D-ribityl)lumazine + phosphate + 2 H2O + H(+). Its pathway is cofactor biosynthesis; riboflavin biosynthesis; riboflavin from 2-hydroxy-3-oxobutyl phosphate and 5-amino-6-(D-ribitylamino)uracil: step 1/2. Catalyzes the formation of 6,7-dimethyl-8-ribityllumazine by condensation of 5-amino-6-(D-ribitylamino)uracil with 3,4-dihydroxy-2-butanone 4-phosphate. This is the penultimate step in the biosynthesis of riboflavin. This chain is 6,7-dimethyl-8-ribityllumazine synthase, found in Pseudomonas paraeruginosa (strain DSM 24068 / PA7) (Pseudomonas aeruginosa (strain PA7)).